The chain runs to 128 residues: Large ribosomal subunit protein eL32 (128 aa).

Belongs to the eukaryotic ribosomal protein eL32 family.

The protein is Large ribosomal subunit protein eL32 (rpl32e) of Thermoplasma volcanium (strain ATCC 51530 / DSM 4299 / JCM 9571 / NBRC 15438 / GSS1).